Consider the following 66-residue polypeptide: Large ribosomal subunit protein bL35 (66 aa).

Basic residues predominate over residues 1–16; the sequence is MPKMKTHKGSAKRFKK. The tract at residues 1-24 is disordered; sequence MPKMKTHKGSAKRFKKTGTGQLKR.

The protein belongs to the bacterial ribosomal protein bL35 family.

The protein is Large ribosomal subunit protein bL35 of Anoxybacillus flavithermus (strain DSM 21510 / WK1).